Here is a 353-residue protein sequence, read N- to C-terminus: Methylthioribose-1-phosphate isomerase (353 aa).

Residues 51–53 (RGA), Arg94, and Gln199 each bind substrate. The Proton donor role is filled by Asp240. Residue 250–251 (NK) coordinates substrate.

This sequence belongs to the eIF-2B alpha/beta/delta subunits family. MtnA subfamily. In terms of assembly, homodimer.

It catalyses the reaction 5-(methylsulfanyl)-alpha-D-ribose 1-phosphate = 5-(methylsulfanyl)-D-ribulose 1-phosphate. It participates in amino-acid biosynthesis; L-methionine biosynthesis via salvage pathway; L-methionine from S-methyl-5-thio-alpha-D-ribose 1-phosphate: step 1/6. Catalyzes the interconversion of methylthioribose-1-phosphate (MTR-1-P) into methylthioribulose-1-phosphate (MTRu-1-P). In Bacillus velezensis (strain DSM 23117 / BGSC 10A6 / LMG 26770 / FZB42) (Bacillus amyloliquefaciens subsp. plantarum), this protein is Methylthioribose-1-phosphate isomerase.